The sequence spans 514 residues: tRNA-2-methylthio-N(6)-dimethylallyladenosine synthase (514 aa).

A disordered region spans residues 1 to 21; it reads MNEEQRKASSVDVLAERDKKA. Residues 68-186 form the MTTase N-terminal domain; the sequence is RTFLIKTYGC…LPEILEEAYL (119 aa). The [4Fe-4S] cluster site is built by cysteine 77, cysteine 113, cysteine 147, cysteine 223, cysteine 227, and cysteine 230. The 232-residue stretch at 209-440 folds into the Radical SAM core domain; that stretch reads REGNIKAWVN…KKVGHYSQIA (232 aa). One can recognise a TRAM domain in the interval 442–505; it reads SKYEGQTVTV…QYSLNGSFVK (64 aa).

It belongs to the methylthiotransferase family. MiaB subfamily. As to quaternary structure, monomer. [4Fe-4S] cluster serves as cofactor.

It localises to the cytoplasm. It carries out the reaction N(6)-dimethylallyladenosine(37) in tRNA + (sulfur carrier)-SH + AH2 + 2 S-adenosyl-L-methionine = 2-methylsulfanyl-N(6)-dimethylallyladenosine(37) in tRNA + (sulfur carrier)-H + 5'-deoxyadenosine + L-methionine + A + S-adenosyl-L-homocysteine + 2 H(+). In terms of biological role, catalyzes the methylthiolation of N6-(dimethylallyl)adenosine (i(6)A), leading to the formation of 2-methylthio-N6-(dimethylallyl)adenosine (ms(2)i(6)A) at position 37 in tRNAs that read codons beginning with uridine. The sequence is that of tRNA-2-methylthio-N(6)-dimethylallyladenosine synthase from Staphylococcus aureus (strain N315).